Consider the following 92-residue polypeptide: Small ribosomal subunit protein uS19 (92 aa).

Belongs to the universal ribosomal protein uS19 family.

Functionally, protein S19 forms a complex with S13 that binds strongly to the 16S ribosomal RNA. In Sulfurovum sp. (strain NBC37-1), this protein is Small ribosomal subunit protein uS19.